A 155-amino-acid polypeptide reads, in one-letter code: Transcription antitermination protein NusB (155 aa).

It belongs to the NusB family.

Its function is as follows. Involved in transcription antitermination. Required for transcription of ribosomal RNA (rRNA) genes. Binds specifically to the boxA antiterminator sequence of the ribosomal RNA (rrn) operons. In Halorhodospira halophila (strain DSM 244 / SL1) (Ectothiorhodospira halophila (strain DSM 244 / SL1)), this protein is Transcription antitermination protein NusB.